A 77-amino-acid chain; its full sequence is Sec-independent protein translocase protein TatA (77 aa).

Residues methionine 1 to glycine 21 form a helical membrane-spanning segment. The disordered stretch occupies residues glycine 46–glutamine 77.

The protein belongs to the TatA/E family. As to quaternary structure, the Tat system comprises two distinct complexes: a TatABC complex, containing multiple copies of TatA, TatB and TatC subunits, and a separate TatA complex, containing only TatA subunits. Substrates initially bind to the TatABC complex, which probably triggers association of the separate TatA complex to form the active translocon.

The protein localises to the cell inner membrane. Its function is as follows. Part of the twin-arginine translocation (Tat) system that transports large folded proteins containing a characteristic twin-arginine motif in their signal peptide across membranes. TatA could form the protein-conducting channel of the Tat system. The chain is Sec-independent protein translocase protein TatA from Cupriavidus necator (strain ATCC 17699 / DSM 428 / KCTC 22496 / NCIMB 10442 / H16 / Stanier 337) (Ralstonia eutropha).